A 46-amino-acid polypeptide reads, in one-letter code: Diuretic hormone (46 aa).

Ile46 carries the isoleucine amide modification.

The protein belongs to the sauvagine/corticotropin-releasing factor/urotensin I family.

It is found in the secreted. Functionally, regulation of fluid secretion. Stimulates primary urine secretion by Malpighian tubules and causes a dose-dependent stimulation of cAMP levels in the tubules. The protein is Diuretic hormone of Acheta domesticus (House cricket).